Reading from the N-terminus, the 172-residue chain is Light-harvesting complex-like protein OHP2, chloroplastic (172 aa).

The transit peptide at 1–43 (MSVASPIQCIRILNPSSSSSSSTASSSFRFSTTTKPCVFIIRC) directs the protein to the chloroplast. Topologically, residues 44 to 135 (SQTEGPLRRP…QPKNEISNGR (92 aa)) are stromal. A disordered region spans residues 45–90 (QTEGPLRRPSAPPTLREPQKPVPPSQPSSSPPPSPPPQKAVAVDGK). The segment covering 64–82 (KPVPPSQPSSSPPPSPPPQ) has biased composition (pro residues). A helical transmembrane segment spans residues 136–156 (WAMFGFAVGMLTEYATGSDLV). The Lumenal segment spans residues 157–172 (DQVKILLSNFGILDLE).

It belongs to the ELIP/psbS family. As to quaternary structure, component of a high molecular weight complex containing OHP1, OHP2 and HCF244, and PSII core proteins D1/D2, HCF136 and HCF173. Forms a trimeric complex with OHP1 and HCF244 that mutually stabilizes each subunit.

Its subcellular location is the plastid. The protein resides in the chloroplast thylakoid membrane. In terms of biological role, may play a photoprotective role within PSI in response to light stress. Forms a trimeric complex with OHP1 and HCF244 that is required to promote PSII core subunit assembly. The trimeric complex forms a transient PSII reaction center-like complex with PsbA, PsbD, PsbE, PsbF and PsbI subunits in thylakoids for early assembly of PSII as well as PSII repair. The trimeric complex is required for the recruitment of ribosomes to the psbA mRNA during PSII biogenesis and repair. Forms a heterodimer with OHP1 that binds chlorophylls and carotenoids, and that may function in the delivery of pigments to the PsbA subunit of PSII. The sequence is that of Light-harvesting complex-like protein OHP2, chloroplastic from Arabidopsis thaliana (Mouse-ear cress).